The following is a 343-amino-acid chain: Protease HtpX homolog (343 aa).

2 helical membrane-spanning segments follow: residues 7 to 24 and 29 to 46; these read TMLL…GYLV and GMVV…FSYW. His130 contacts Zn(2+). Residue Glu131 is part of the active site. His134 is a binding site for Zn(2+). 2 consecutive transmembrane segments (helical) span residues 145–165 and 177–197; these read LTAT…LMGM and GAGM…AMLV. Glu206 is a Zn(2+) binding site. The segment at 308 to 343 is disordered; it reads NLEDEDLNPEAQNGFTHNQKKKTVRRGKDRPTWLRH. Basic residues predominate over residues 325-335; it reads NQKKKTVRRGK.

It belongs to the peptidase M48B family. Requires Zn(2+) as cofactor.

The protein localises to the cell inner membrane. This is Protease HtpX homolog from Bartonella bacilliformis (strain ATCC 35685 / KC583 / Herrer 020/F12,63).